The sequence spans 340 residues: GTPase Obg (340 aa).

The region spanning 1–159 (MRFIDKAKIH…RWIELELKLI (159 aa)) is the Obg domain. An OBG-type G domain is found at 160-331 (ADIGIIGFPN…LIKLIAEVYE (172 aa)). Residues 166 to 173 (GFPNAGKS), 191 to 195 (FTTLT), 213 to 216 (DIPG), 283 to 286 (NKID), and 312 to 314 (SLV) each bind GTP. Serine 173 and threonine 193 together coordinate Mg(2+).

The protein belongs to the TRAFAC class OBG-HflX-like GTPase superfamily. OBG GTPase family. In terms of assembly, monomer. The cofactor is Mg(2+).

The protein localises to the cytoplasm. Its function is as follows. An essential GTPase which binds GTP, GDP and possibly (p)ppGpp with moderate affinity, with high nucleotide exchange rates and a fairly low GTP hydrolysis rate. Plays a role in control of the cell cycle, stress response, ribosome biogenesis and in those bacteria that undergo differentiation, in morphogenesis control. This is GTPase Obg from Persephonella marina (strain DSM 14350 / EX-H1).